The sequence spans 492 residues: Falcipain-3 (492 aa).

Residues Met-1–Ser-35 lie on the Cytoplasmic side of the membrane. The propeptide at Met-1–Lys-242 is activation peptide. The Bipartite vacuolar targeting signal 1 motif lies at Glu-16–Lys-25. Residues Ile-36 to Thr-56 form a helical; Signal-anchor for type II membrane protein membrane-spanning segment. Over Arg-57 to Glu-492 the chain is Lumenal. N-linked (GlcNAc...) asparagine glycosylation occurs at Asn-61. A Bipartite vacuolar targeting signal 2 motif is present at residues Lys-84–Lys-105. A glycan (N-linked (GlcNAc...) asparagine) is linked at Asn-129. The Nose motif; required for the correct folding of the mature form signature appears at Glu-251–Leu-268. 4 disulfides stabilise this stretch: Cys-290-Cys-331, Cys-324-Cys-365, Cys-350-Cys-370, and Cys-419-Cys-480. Cys-293 is a catalytic residue. His-425 is a catalytic residue. The short motif at Asp-436–Met-445 is the Arm motif; binds to host hemoglobin and required for the inhibitory interaction between the propeptide and the catalytic domain element. The active site involves Asn-455.

The protein belongs to the peptidase C1 family. In terms of processing, auto-cleavage occurs at acidic pH. The proenzyme is the predominant form in late trophozoites and both the pro and mature enzyme are present in schizonts.

The protein resides in the membrane. It is found in the vacuole. Its subcellular location is the cytoplasmic vesicle membrane. Its activity is regulated as follows. Inhibited by cysteine protease inhibitor ICP. Its function is as follows. Cysteine protease which cleaves native host hemoglobin and globin in the food vacuole during the asexual blood stage. Preferentially cleaves substrates which have an arginine at the P1 position and a leucine at the P2 position. The sequence is that of Falcipain-3 from Plasmodium falciparum (isolate 3D7).